We begin with the raw amino-acid sequence, 536 residues long: GATA zinc finger domain-containing protein 9 (536 aa).

2 stretches are compositionally biased toward polar residues: residues 1-20 and 36-55; these read MTSF…QPHS and CQSS…NPNA. 5 disordered regions span residues 1 to 77, 183 to 211, 237 to 258, 273 to 342, and 370 to 423; these read MTSF…LSGS, SSSL…VVRS, RSAF…GGGS, QLHY…GFVQ, and ALFS…NISS. Residues 56–72 are compositionally biased toward low complexity; it reads TTNNTTTTTTTTTTTTN. Residues 188–206 show a composition bias toward acidic residues; the sequence is SEDDDCCYETEEDDNGEDG. Residues 237-247 show a composition bias toward basic residues; the sequence is RSAFKKNKKDY. Residues 273 to 283 show a composition bias toward polar residues; that stretch reads QLHYSNSMTDN. 2 stretches are compositionally biased toward low complexity: residues 318–335 and 379–399; these read SNSN…NNNN and PSPT…NSGN. The GATA-type zinc-finger motif lies at 479 to 504; that stretch reads CRHCGTTDTPEWRRGPDGRKSLCNAC.

The sequence is that of GATA zinc finger domain-containing protein 9 (gtaI) from Dictyostelium discoideum (Social amoeba).